A 368-amino-acid polypeptide reads, in one-letter code: tRNA-specific 2-thiouridylase MnmA (368 aa).

ATP contacts are provided by residues 12-19 (GMSGGVDS) and M38. The tract at residues 98–100 (NPD) is interaction with target base in tRNA. Catalysis depends on C103, which acts as the Nucleophile. Residues C103 and C200 are joined by a disulfide bond. Residue G128 coordinates ATP. Positions 150–152 (KDQ) are interaction with tRNA. C200 serves as the catalytic Cysteine persulfide intermediate. An interaction with tRNA region spans residues 311–312 (RY).

The protein belongs to the MnmA/TRMU family.

The protein resides in the cytoplasm. It catalyses the reaction S-sulfanyl-L-cysteinyl-[protein] + uridine(34) in tRNA + AH2 + ATP = 2-thiouridine(34) in tRNA + L-cysteinyl-[protein] + A + AMP + diphosphate + H(+). Its function is as follows. Catalyzes the 2-thiolation of uridine at the wobble position (U34) of tRNA, leading to the formation of s(2)U34. The sequence is that of tRNA-specific 2-thiouridylase MnmA from Aeromonas salmonicida (strain A449).